The primary structure comprises 396 residues: MSVGMGVDLEAFRKSQRADGFASILAIGTANPPNVVDQSTYPDYYFRNTNNEDNTDLKDKFKRICERSAIKKRHMYLTEEILKKNPELCAFLEVPSLDTRQAMLAVEVPRLGKEAAEKAIEEWGQPKSRITHLIFCTTTTPDLPGADFEVAKLLGLHPSVKRVGVFQHGCFAGGTVLRLAKDLAENNRGARVLVVCSENTAVTFRGPSETHLDGLVGLALFGDGAAALIVGADPIPQVEKPCFEIVWTAQTVVPNSDGAISGKLREVGLTFQLKGAVPDLISTNIEKCLVEAFSQFNISDWNQLFWIAHPGGRAILDQVEASLNLDPTKLRATRHVMSEYGNMSSACVHFILDETRKASRQNGCSTSGGGFQMGVLFGFGPGLTVETVVLKSIPFP.

60 to 63 (KFKR) lines the substrate pocket. Cys170 is a catalytic residue. Substrate contacts are provided by residues Leu273 and 311-313 (GGR).

Belongs to the thiolase-like superfamily. Chalcone/stilbene synthases family. Homodimer.

It is found in the cytoplasm. The catalysed reaction is (E)-cinnamoyl-CoA + 3 malonyl-CoA + 3 H(+) = (E)-pinosylvin + 4 CO2 + 4 CoA. The enzyme catalyses 3-phenylpropanoyl-CoA + 3 malonyl-CoA + 3 H(+) = dihydropinosylvin + 4 CO2 + 4 CoA. It participates in phytoalexin biosynthesis; pinosylvin biosynthesis. Catalyzes the production of pinosylvin from cinnamoyl-CoA and malonyl-CoA, and dihydropinosylvin from dihydrocinnamoyl-CoA. The protein is Pinosylvin synthase 2 of Pinus strobus (Eastern white pine).